The sequence spans 82 residues: uncharacterized protein (82 aa).

Its function is as follows. This protein may be involved in virus assembly. This is an uncharacterized protein from Sulfolobus spindle-shape virus 1 (SSV1).